We begin with the raw amino-acid sequence, 709 residues long: Polyribonucleotide nucleotidyltransferase (709 aa).

Mg(2+) is bound by residues Asp487 and Asp493. One can recognise a KH domain in the interval 554 to 613 (PRIHTMKISSDKIKDVIGKGGAVIRALCEETGTTIEIEDDGTIKIAATEGAAAKEAIRRI). An S1 motif domain is found at 623–691 (GKIYTGKVMR…RQGRIRLSIK (69 aa)).

It belongs to the polyribonucleotide nucleotidyltransferase family. As to quaternary structure, component of the RNA degradosome, which is a multiprotein complex involved in RNA processing and mRNA degradation. The cofactor is Mg(2+).

It localises to the cytoplasm. It carries out the reaction RNA(n+1) + phosphate = RNA(n) + a ribonucleoside 5'-diphosphate. Functionally, involved in mRNA degradation. Catalyzes the phosphorolysis of single-stranded polyribonucleotides processively in the 3'- to 5'-direction. This Aliivibrio fischeri (strain ATCC 700601 / ES114) (Vibrio fischeri) protein is Polyribonucleotide nucleotidyltransferase.